The following is a 127-amino-acid chain: Small ribosomal subunit protein bS6 (127 aa).

The segment at 96–127 is disordered; it reads VTTPSPMMKEEKSRSLTPAAGDEGKPAEAAEA. Residues 117–127 are compositionally biased toward basic and acidic residues; that stretch reads DEGKPAEAAEA.

This sequence belongs to the bacterial ribosomal protein bS6 family.

Binds together with bS18 to 16S ribosomal RNA. This is Small ribosomal subunit protein bS6 from Azoarcus sp. (strain BH72).